A 351-amino-acid polypeptide reads, in one-letter code: Probable protein phosphatase 2C 8 (351 aa).

Residues 1–63 form a disordered region; the sequence is MLEKESDLTA…REAEEDKPSF (63 aa). A compositionally biased stretch (basic and acidic residues) spans 54 to 63; that stretch reads REAEEDKPSF. The PPM-type phosphatase domain occupies 74–348; sequence EADVAEDKGA…DNCTAIVIVF (275 aa). Mn(2+) contacts are provided by Asp114, Gly115, Asp295, and Asp339.

This sequence belongs to the PP2C family. Requires Mg(2+) as cofactor. Mn(2+) serves as cofactor.

It carries out the reaction O-phospho-L-seryl-[protein] + H2O = L-seryl-[protein] + phosphate. It catalyses the reaction O-phospho-L-threonyl-[protein] + H2O = L-threonyl-[protein] + phosphate. This is Probable protein phosphatase 2C 8 from Arabidopsis thaliana (Mouse-ear cress).